The primary structure comprises 234 residues: Proteasome subunit beta (234 aa).

A disordered region spans residues 1 to 35; the sequence is MNPDLNMNPHDSGRTDPYAPELGEIATDEGDGENV. Residues 1 to 39 constitute a propeptide, removed in mature form; by autocatalysis; it reads MNPDLNMNPHDSGRTDPYAPELGEIATDEGDGENVTKTG. Threonine 40 (nucleophile) is an active-site residue.

The protein belongs to the peptidase T1B family. In terms of assembly, the 20S proteasome core is composed of 14 alpha and 14 beta subunits that assemble into four stacked heptameric rings, resulting in a barrel-shaped structure. The two inner rings, each composed of seven catalytic beta subunits, are sandwiched by two outer rings, each composed of seven alpha subunits. The catalytic chamber with the active sites is on the inside of the barrel. Has a gated structure, the ends of the cylinder being occluded by the N-termini of the alpha-subunits. Is capped at one or both ends by the proteasome regulatory ATPase, PAN.

It localises to the cytoplasm. It carries out the reaction Cleavage of peptide bonds with very broad specificity.. Its activity is regulated as follows. The formation of the proteasomal ATPase PAN-20S proteasome complex, via the docking of the C-termini of PAN into the intersubunit pockets in the alpha-rings, triggers opening of the gate for substrate entry. Interconversion between the open-gate and close-gate conformations leads to a dynamic regulation of the 20S proteasome proteolysis activity. Its function is as follows. Component of the proteasome core, a large protease complex with broad specificity involved in protein degradation. The sequence is that of Proteasome subunit beta from Halorhabdus utahensis (strain DSM 12940 / JCM 11049 / AX-2).